The primary structure comprises 225 residues: Phosphoserine phosphatase (225 aa).

Met-1 carries the post-translational modification N-acetylmethionine. The active-site Nucleophile is Asp-20. 2 residues coordinate Mg(2+): Asp-20 and Asp-22. Asp-20–Asp-22 contacts L-serine. Asp-22 acts as the Proton donor in catalysis. Residue Met-52 coordinates O-phospho-L-serine. Position 53 (Gly-53) interacts with phosphate. L-serine is bound by residues Ser-109 to Gly-111 and Lys-158. O-phospho-L-serine contacts are provided by residues Ser-109–Gly-111 and Lys-158. Asp-179 is a binding site for Mg(2+). Thr-182 is a binding site for O-phospho-L-serine. A phosphate-binding site is contributed by Thr-182.

This sequence belongs to the HAD-like hydrolase superfamily. SerB family. In terms of assembly, homodimer. Requires Mg(2+) as cofactor.

The protein localises to the cytoplasm. It is found in the cytosol. It carries out the reaction O-phospho-L-serine + H2O = L-serine + phosphate. The enzyme catalyses O-phospho-D-serine + H2O = D-serine + phosphate. It functions in the pathway amino-acid biosynthesis; L-serine biosynthesis; L-serine from 3-phospho-D-glycerate: step 3/3. Its function is as follows. Catalyzes the last irreversible step in the biosynthesis of L-serine from carbohydrates, the dephosphorylation of O-phospho-L-serine to L-serine. L-serine can then be used in protein synthesis, to produce other amino acids, in nucleotide metabolism or in glutathione synthesis, or can be racemized to D-serine, a neuromodulator. May also act on O-phospho-D-serine. The sequence is that of Phosphoserine phosphatase from Bos taurus (Bovine).